A 96-amino-acid chain; its full sequence is uncharacterized protein (96 aa).

Residues 1 to 19 (MKQIIPALITLSFSPMAIA) form the signal peptide.

This is an uncharacterized protein from Synechocystis sp. (strain ATCC 27184 / PCC 6803 / Kazusa).